Here is a 119-residue protein sequence, read N- to C-terminus: Large ribosomal subunit protein bL19 (119 aa).

Belongs to the bacterial ribosomal protein bL19 family.

Its function is as follows. This protein is located at the 30S-50S ribosomal subunit interface and may play a role in the structure and function of the aminoacyl-tRNA binding site. In Pseudarthrobacter chlorophenolicus (strain ATCC 700700 / DSM 12829 / CIP 107037 / JCM 12360 / KCTC 9906 / NCIMB 13794 / A6) (Arthrobacter chlorophenolicus), this protein is Large ribosomal subunit protein bL19.